Consider the following 452-residue polypeptide: Probable pectate lyase 9 (452 aa).

An N-terminal signal peptide occupies residues 1-25 (MATSSLKLTSACFVLLFIFVGCVLT). N-linked (GlcNAc...) asparagine glycosylation is found at N88, N139, N214, and N233. D250 provides a ligand contact to Ca(2+). N271 is a glycosylation site (N-linked (GlcNAc...) asparagine). Positions 274 and 278 each coordinate Ca(2+). N281 and N305 each carry an N-linked (GlcNAc...) asparagine glycan. R330 is a catalytic residue. N374 is a glycosylation site (N-linked (GlcNAc...) asparagine).

This sequence belongs to the polysaccharide lyase 1 family. The cofactor is Ca(2+).

It carries out the reaction Eliminative cleavage of (1-&gt;4)-alpha-D-galacturonan to give oligosaccharides with 4-deoxy-alpha-D-galact-4-enuronosyl groups at their non-reducing ends.. The protein operates within glycan metabolism; pectin degradation; 2-dehydro-3-deoxy-D-gluconate from pectin: step 2/5. This chain is Probable pectate lyase 9, found in Arabidopsis thaliana (Mouse-ear cress).